Here is a 516-residue protein sequence, read N- to C-terminus: Flavin-dependent halogenase armH2 (516 aa).

Residues Gly16, Ala19, and Glu49 each contribute to the FAD site. The chloride site is built by Ser328 and Gly329. Ile330 provides a ligand contact to FAD. The interval 440 to 475 is disordered; sequence PQANGNGAAKQDAVPAPIPVALSSGAGPEKDAKRRE.

This sequence belongs to the flavin-dependent halogenase family.

The catalysed reaction is melleolide F + FADH2 + chloride + O2 = 6'-chloromelleolide F + FAD + 2 H2O + H(+). Functionally, flavin-dependent halogenase involved in the biosynthesis of melleolides, a range of antifungal and phytotoxic polyketide derivatives composed of an orsellinic acid (OA) moiety esterified to various sesquiterpene alcohols. The halogenase catalyzes the transfer of a single chlorine atom to the melleolide backbone, resulting in a 6'-chloromelleolide product. The enzyme acts on free substrate and does not depend on carrier-protein-dependent acceptor molecules. In Armillaria mellea (Honey mushroom), this protein is Flavin-dependent halogenase armH2.